Consider the following 994-residue polypeptide: Translation initiation factor IF-2 (994 aa).

Composition is skewed to polar residues over residues 1 to 10 (MSDENNNGRN) and 28 to 40 (SVSS…SFSH). Positions 1-405 (MSDENNNGRN…REKRKGGAQE (405 aa)) are disordered. Low complexity predominate over residues 76 to 91 (PQKPAGPAQAPRAPQG). The segment covering 98–131 (AEERAARQRAIELARQQEADRRAREERARAEAEA) has biased composition (basic and acidic residues). Residues 132 to 146 (ARAAQQKAAQAAAEP) show a composition bias toward low complexity. Over residues 147–157 (PAAPPPAPAAP) the composition is skewed to pro residues. Residues 158 to 172 (PAAAAPAAPAAEAAP) show a composition bias toward low complexity. Residues 173 to 188 (APKPAPSPRPVPPSAP) are compositionally biased toward pro residues. The segment covering 189 to 204 (APQAARPAAEAPPRQA) has biased composition (low complexity). 2 stretches are compositionally biased toward basic and acidic residues: residues 216-235 (PDRR…RPSN) and 247-273 (PRRD…DRPQ). A compositionally biased stretch (gly residues) spans 298–310 (RGPGGPRGPGGPR). Basic and acidic residues-rich tracts occupy residues 336-350 (VDRR…RDPG) and 390-402 (RARE…RKGG). Residues 492 to 662 (PRPPVVAVMG…LLQAEVLDLK (171 aa)) enclose the tr-type G domain. Residues 501-508 (GHVDHGKT) are G1. 501 to 508 (GHVDHGKT) lines the GTP pocket. Residues 526–530 (GITQH) are G2. Positions 548-551 (DTPG) are G3. Residues 548 to 552 (DTPGH) and 602 to 605 (NKID) each bind GTP. Residues 602–605 (NKID) form a G4 region. The tract at residues 638 to 640 (SAT) is G5.

It belongs to the TRAFAC class translation factor GTPase superfamily. Classic translation factor GTPase family. IF-2 subfamily.

The protein localises to the cytoplasm. Functionally, one of the essential components for the initiation of protein synthesis. Protects formylmethionyl-tRNA from spontaneous hydrolysis and promotes its binding to the 30S ribosomal subunits. Also involved in the hydrolysis of GTP during the formation of the 70S ribosomal complex. The protein is Translation initiation factor IF-2 of Phenylobacterium zucineum (strain HLK1).